Consider the following 205-residue polypeptide: Protein Nef (205 aa).

A lipid anchor (N-myristoyl glycine; by host) is attached at glycine 2. The residue at position 6 (serine 6) is a Phosphoserine; by host. Positions 62–65 (EEGD) are acidic; interacts with host PACS1 and PACS2; stabilizes the interaction of NEF/MHC-I with host AP1M1; necessary for MHC-I internalization. Residues 69 to 78 (PVRPQVPLRP) form an SH3-binding; interaction with Src family tyrosine kinases region. The PxxP; stabilizes the interaction of NEF/MHC-I with host AP1M1; necessary for MHC-I internalization signature appears at 72–75 (PQVP). Residues 108 to 124 (EILDLWVYHTQGFFPDW) are mediates dimerization, Nef-PTE1 interaction. Positions 148 to 180 (VDPAEVEEATGGENNSLLHPICQHGVDDEEKEV) are binding to ATP6V1H. The Dileucine internalization motif; necessary for CD4 internalization motif lies at 164 to 165 (LL). The short motif at 174–175 (DD) is the Diacidic; necessary for CD4 internalization element.

The protein belongs to the lentivirus primate group Nef protein family. As to quaternary structure, monomer; cytosolic form. Homodimer; membrane bound form. Interacts with Nef associated p21-activated kinase (PAK2); this interaction activates PAK2. Associates with the Nef-MHC-I-AP1 complex; this complex is required for MHC-I internalization. Interacts (via C-terminus) with host PI3-kinase. Interacts with host PACS1; this interaction seems to be weak. Interacts with host PACS2. Interacts with host LCK and MAPK3; these interactions inhibit the kinase activity of the latter. Interacts with host ATP6V1H; this interaction may play a role in CD4 endocytosis. Associates with the CD4-Nef-AP2 complex; this complex is required for CD4 internalization. Interacts with host AP2 subunit alpha and AP2 subunit sigma2. Interacts with TCR-zeta chain; this interaction up-regulates the Fas ligand (FasL) surface expression. Interacts with host HCK, LYN, and SRC; these interactions activate the Src family kinases. Interacts with MAP3K5; this interaction inhibits the Fas and TNFR-mediated death signals. Interacts with beta-COP and PTE1. Interacts with human RACK1; this increases Nef phosphorylation by PKC. Interacts with TP53; this interaction decreases the half-life of TP53, protecting the infected cell against p53-mediated apoptosis. Post-translationally, the virion-associated Nef proteins are cleaved by the viral protease to release the soluble C-terminal core protein. Nef is probably cleaved concomitantly with viral structural proteins on maturation of virus particles. In terms of processing, myristoylated. Phosphorylated on serine residues, probably by host PKCdelta and theta.

The protein resides in the host cell membrane. Its subcellular location is the virion. It localises to the secreted. It is found in the host Golgi apparatus membrane. Functionally, factor of infectivity and pathogenicity, required for optimal virus replication. Alters numerous pathways of T-lymphocyte function and down-regulates immunity surface molecules in order to evade host defense and increase viral infectivity. Alters the functionality of other immunity cells, like dendritic cells, monocytes/macrophages and NK cells. In infected CD4(+) T-lymphocytes, down-regulates the surface MHC-I, mature MHC-II, CD4, CD28, CCR5 and CXCR4 molecules. Mediates internalization and degradation of host CD4 through the interaction of with the cytoplasmic tail of CD4, the recruitment of AP-2 (clathrin adapter protein complex 2), internalization through clathrin coated pits, and subsequent transport to endosomes and lysosomes for degradation. Diverts host MHC-I molecules to the trans-Golgi network-associated endosomal compartments by an endocytic pathway to finally target them for degradation. MHC-I down-regulation may involve AP-1 (clathrin adapter protein complex 1) or possibly Src family kinase-ZAP70/Syk-PI3K cascade recruited by PACS2. In consequence infected cells are masked for immune recognition by cytotoxic T-lymphocytes. Decreasing the number of immune receptors also prevents reinfection by more HIV particles (superinfection). Down-regulates host SERINC3 and SERINC5 thereby excluding these proteins from the viral particles. Virion infectivity is drastically higher when SERINC3 or SERINC5 are excluded from the viral envelope, because these host antiviral proteins impair the membrane fusion event necessary for subsequent virion penetration. In terms of biological role, bypasses host T-cell signaling by inducing a transcriptional program nearly identical to that of anti-CD3 cell activation. Interaction with TCR-zeta chain up-regulates the Fas ligand (FasL). Increasing surface FasL molecules and decreasing surface MHC-I molecules on infected CD4(+) cells send attacking cytotoxic CD8+ T-lymphocytes into apoptosis. Its function is as follows. Plays a role in optimizing the host cell environment for viral replication without causing cell death by apoptosis. Protects the infected cells from apoptosis in order to keep them alive until the next virus generation is ready to strike. Inhibits the Fas and TNFR-mediated death signals by blocking MAP3K5/ASK1. Decreases the half-life of TP53, protecting the infected cell against p53-mediated apoptosis. Inhibits the apoptotic signals regulated by the Bcl-2 family proteins through the formation of a Nef/PI3-kinase/PAK2 complex that leads to activation of PAK2 and induces phosphorylation of host BAD. Functionally, extracellular Nef protein targets CD4(+) T-lymphocytes for apoptosis by interacting with CXCR4 surface receptors. In Human immunodeficiency virus type 1 group M subtype A (isolate U455) (HIV-1), this protein is Protein Nef.